The chain runs to 496 residues: Probable malate:quinone oxidoreductase (496 aa).

This sequence belongs to the MQO family. It depends on FAD as a cofactor.

It catalyses the reaction (S)-malate + a quinone = a quinol + oxaloacetate. It functions in the pathway carbohydrate metabolism; tricarboxylic acid cycle; oxaloacetate from (S)-malate (quinone route): step 1/1. The chain is Probable malate:quinone oxidoreductase from Prochlorococcus marinus (strain MIT 9313).